The primary structure comprises 325 residues: MIVVGIDHGTSGITACLMENKTVKSIFKMKRTEINENSFLKELEKHVNLQDIDLMGVCYSMGDGIDKITDINKVENRGVINLEGIGKKVGGGTRVYDEIKSSNIPAIVIPGLHKGVKSMDERFNTLFSHIASPEKISICYNAYKTFGFENFILSDISSNTVTLLIKNGKIFGGFDACVGAVGILHGPLDLELIRNIDSKKITANEAFSKAGVVKVTDSYKGVENTKFEIMSNYKNDKKCKLAVDSLVLSVSMEINSLMFLTPEKNVILAGSIGTWKNPNVSEMIKENIDGNVLVLNGESGAIGSAMIAEDILNGKKEILGISVDF.

The protein belongs to the UPF0285 family.

This is UPF0285 protein MmarC6_0247 from Methanococcus maripaludis (strain C6 / ATCC BAA-1332).